A 320-amino-acid polypeptide reads, in one-letter code: Probable cell division protein WhiA (320 aa).

The H-T-H motif DNA-binding region spans 276-310 (TLKELGELVSGGKISKSGINHRLRKIDEIAERLRA).

Belongs to the WhiA family.

Involved in cell division and chromosome segregation. The polypeptide is Probable cell division protein WhiA (Geobacillus sp. (strain WCH70)).